Here is a 210-residue protein sequence, read N- to C-terminus: Large ribosomal subunit protein uL3 (210 aa).

A disordered region spans residues 133 to 156 (ASHGNSLSHRVPGSIGQNQTPGKV). Position 151 is an N5-methylglutamine (Gln151).

This sequence belongs to the universal ribosomal protein uL3 family. As to quaternary structure, part of the 50S ribosomal subunit. Forms a cluster with proteins L14 and L19. Post-translationally, methylated by PrmB.

Its function is as follows. One of the primary rRNA binding proteins, it binds directly near the 3'-end of the 23S rRNA, where it nucleates assembly of the 50S subunit. The protein is Large ribosomal subunit protein uL3 of Hamiltonella defensa subsp. Acyrthosiphon pisum (strain 5AT).